The sequence spans 170 residues: Protein SOB FIVE-LIKE 5 (170 aa).

The SOFL-A motif lies at 10–15; it reads SGWTLY. A disordered region spans residues 17-78; sequence DQSVSSPSPS…GPRNISEEDS (62 aa). The span at 35–44 shows a compositional bias: basic and acidic residues; that stretch reads DSRRRSKDSW. The SOFL-B signature appears at 61-70; that stretch reads SMISDASSGP. The short motif at 79 to 86 is the Nuclear localization signal element; sequence VKKINIVG.

The protein belongs to the SOFL plant protein family. In terms of tissue distribution, expressed in seedlings, roots, flowers and siliques. Barely detectable in leaves.

It is found in the cytoplasm. It localises to the nucleus. Its function is as follows. Involved in cytokinin-mediated development. The chain is Protein SOB FIVE-LIKE 5 from Arabidopsis thaliana (Mouse-ear cress).